A 357-amino-acid polypeptide reads, in one-letter code: tRNA N6-adenosine threonylcarbamoyltransferase (357 aa).

H120 and H124 together coordinate Fe cation. Substrate is bound by residues 143-147, D176, G189, and N289; that span reads LVSGG. D317 contacts Fe cation.

Belongs to the KAE1 / TsaD family. It depends on Fe(2+) as a cofactor.

The protein resides in the cytoplasm. The enzyme catalyses L-threonylcarbamoyladenylate + adenosine(37) in tRNA = N(6)-L-threonylcarbamoyladenosine(37) in tRNA + AMP + H(+). Required for the formation of a threonylcarbamoyl group on adenosine at position 37 (t(6)A37) in tRNAs that read codons beginning with adenine. Is involved in the transfer of the threonylcarbamoyl moiety of threonylcarbamoyl-AMP (TC-AMP) to the N6 group of A37, together with TsaE and TsaB. TsaD likely plays a direct catalytic role in this reaction. The chain is tRNA N6-adenosine threonylcarbamoyltransferase from Polynucleobacter necessarius subsp. necessarius (strain STIR1).